We begin with the raw amino-acid sequence, 301 residues long: GTP cyclohydrolase FolE2 (301 aa).

This sequence belongs to the GTP cyclohydrolase IV family.

The catalysed reaction is GTP + H2O = 7,8-dihydroneopterin 3'-triphosphate + formate + H(+). Its pathway is cofactor biosynthesis; 7,8-dihydroneopterin triphosphate biosynthesis; 7,8-dihydroneopterin triphosphate from GTP: step 1/1. Functionally, converts GTP to 7,8-dihydroneopterin triphosphate. The chain is GTP cyclohydrolase FolE2 from Pseudomonas putida (strain GB-1).